Consider the following 883-residue polypeptide: Integrator complex subunit 6-B (883 aa).

The 225-residue stretch at 3-227 folds into the VWFA domain; that stretch reads ILLFLLDTSA…QCLESLVQKI (225 aa). The Inhibitory loop motif lies at 626-633; it reads MMIDEADE.

It belongs to the Integrator subunit 6 family. In terms of assembly, component of the Integrator complex, composed of core subunits INTS1, INTS2, INTS3, INTS4, INTS5, INTS6, INTS7, INTS8, INTS9/RC74, INTS10, INTS11/CPSF3L, INTS12, INTS13, INTS14 and INTS15. The core complex associates with protein phosphatase 2A subunits PPP2CA and PPP2R1A, to form the Integrator-PP2A (INTAC) complex.

The protein localises to the nucleus. It localises to the chromosome. Functionally, component of the integrator complex, a multiprotein complex that terminates RNA polymerase II (Pol II) transcription in the promoter-proximal region of genes. The integrator complex provides a quality checkpoint during transcription elongation by driving premature transcription termination of transcripts that are unfavorably configured for transcriptional elongation: the complex terminates transcription by (1) catalyzing dephosphorylation of the C-terminal domain (CTD) of Pol II subunit POLR2A/RPB1 and SUPT5H/SPT5, (2) degrading the exiting nascent RNA transcript via endonuclease activity and (3) promoting the release of Pol II from bound DNA. The integrator complex is also involved in terminating the synthesis of non-coding Pol II transcripts, such as enhancer RNAs (eRNAs), small nuclear RNAs (snRNAs), telomerase RNAs and long non-coding RNAs (lncRNAs). Within the integrator complex, INTS6 acts as a molecular adapter that promotes assembly of protein phosphatase 2A (PP2A) subunits to the integrator core complex, promoting recruitment of PP2A to transcription pause-release checkpoint. The chain is Integrator complex subunit 6-B (ints6-b) from Xenopus laevis (African clawed frog).